We begin with the raw amino-acid sequence, 216 residues long: Holliday junction branch migration complex subunit RuvA (216 aa).

The domain I stretch occupies residues 1–64 (MISFIKGVLI…EDAQQLYGFK (64 aa)). The segment at 65–143 (SKVDKKVFQE…KMANEIYAQT (79 aa)) is domain II. A flexible linker region spans residues 144–163 (SGTTTTSQDSQAQQAPTSAV). A domain III region spans residues 164–216 (LANSIFNESVDALLALGYKQKDAEKMSRSAMGDATTAAEVIRKALQGSIRSKR).

The protein belongs to the RuvA family. As to quaternary structure, homotetramer. Forms an RuvA(8)-RuvB(12)-Holliday junction (HJ) complex. HJ DNA is sandwiched between 2 RuvA tetramers; dsDNA enters through RuvA and exits via RuvB. An RuvB hexamer assembles on each DNA strand where it exits the tetramer. Each RuvB hexamer is contacted by two RuvA subunits (via domain III) on 2 adjacent RuvB subunits; this complex drives branch migration. In the full resolvosome a probable DNA-RuvA(4)-RuvB(12)-RuvC(2) complex forms which resolves the HJ.

It is found in the cytoplasm. The RuvA-RuvB-RuvC complex processes Holliday junction (HJ) DNA during genetic recombination and DNA repair, while the RuvA-RuvB complex plays an important role in the rescue of blocked DNA replication forks via replication fork reversal (RFR). RuvA specifically binds to HJ cruciform DNA, conferring on it an open structure. The RuvB hexamer acts as an ATP-dependent pump, pulling dsDNA into and through the RuvAB complex. HJ branch migration allows RuvC to scan DNA until it finds its consensus sequence, where it cleaves and resolves the cruciform DNA. This is Holliday junction branch migration complex subunit RuvA from Francisella tularensis subsp. novicida (strain U112).